Reading from the N-terminus, the 418-residue chain is Vacuole membrane protein HFL1 (418 aa).

At 1 to 5 the chain is on the extracellular side; sequence MENKL. Residues 6–26 form a helical membrane-spanning segment; sequence LCWWLYWPCVYSSIIATIISF. The Cytoplasmic segment spans residues 27 to 43; it reads YTITRHLLNYRKPYEQR. Residues 44–64 traverse the membrane as a helical segment; that stretch reads LSIRILLLVPIFSVSCASGII. The Extracellular portion of the chain corresponds to 65 to 78; sequence KPEAAQFYVDPIRE. The helical transmembrane segment at 79–99 threads the bilayer; that stretch reads FYEAFVIYTFFTFLTLLLGGE. Residues 100-141 lie on the Cytoplasmic side of the membrane; sequence RNIITVLSLNHAPTRHPIPLIGKICKPIDLSDPFDFLFVKKG. The chain crosses the membrane as a helical span at residues 142–162; that stretch reads ILQYVWFKPFYCFGTLICSAW. At 163–168 the chain is on the extracellular side; it reads KLPKFE. The chain crosses the membrane as a helical span at residues 169–189; sequence IFLNVFYNISVTWSLYSLALF. Topologically, residues 190–205 are cytoplasmic; the sequence is WKCLYPELTPYKPWLK. Residues 206–226 traverse the membrane as a helical segment; that stretch reads FLCVKLIIFASYWQSIIIQGL. Topologically, residues 227–246 are extracellular; that stretch reads VVTGKLGTGNQDRTSGYVYK. A helical membrane pass occupies residues 247-267; the sequence is NGLLCIEMVPFAILHAVAFPW. Residues 268-418 lie on the Cytoplasmic side of the membrane; that stretch reads NKYTAFSIPY…DVQSRSSMAC (151 aa). An ATG8-interacting region region spans residues 379-402; it reads RTFPEDPNYPVVHDYTMGHRYSRS.

Belongs to the TMEM184 family. Interacts with ATG8.

It is found in the vacuole membrane. Vacuole membrane protein that recruits ATG8 to facilitate the degradation of vacuolar integral membrane proteins during early-stationary vacuole turnover (EVT) when cells enter stationary phase. This Saccharomyces cerevisiae (strain ATCC 204508 / S288c) (Baker's yeast) protein is Vacuole membrane protein HFL1.